The sequence spans 380 residues: Erythronate-4-phosphate dehydrogenase (380 aa).

Residues Ser-45 and Thr-66 each contribute to the substrate site. NAD(+) contacts are provided by residues Asp-146, Thr-174, 205 to 207 (ASR), and Asp-231. Arg-207 is an active-site residue. Glu-236 is an active-site residue. Catalysis depends on His-253, which acts as the Proton donor. Gly-256 serves as a coordination point for NAD(+). Tyr-257 serves as a coordination point for substrate.

This sequence belongs to the D-isomer specific 2-hydroxyacid dehydrogenase family. PdxB subfamily. As to quaternary structure, homodimer.

It localises to the cytoplasm. The catalysed reaction is 4-phospho-D-erythronate + NAD(+) = (R)-3-hydroxy-2-oxo-4-phosphooxybutanoate + NADH + H(+). It participates in cofactor biosynthesis; pyridoxine 5'-phosphate biosynthesis; pyridoxine 5'-phosphate from D-erythrose 4-phosphate: step 2/5. Its function is as follows. Catalyzes the oxidation of erythronate-4-phosphate to 3-hydroxy-2-oxo-4-phosphonooxybutanoate. The protein is Erythronate-4-phosphate dehydrogenase of Pseudomonas fluorescens (strain SBW25).